A 332-amino-acid chain; its full sequence is Biotin synthase (332 aa).

The 230-residue stretch at 46-275 (SDIQRASLLS…RARVRLSAGR (230 aa)) folds into the Radical SAM core domain. Residues Cys-61, Cys-65, and Cys-68 each contribute to the [4Fe-4S] cluster site. [2Fe-2S] cluster-binding residues include Cys-106, Cys-138, Cys-198, and Arg-270.

The protein belongs to the radical SAM superfamily. Biotin synthase family. Homodimer. Requires [4Fe-4S] cluster as cofactor. It depends on [2Fe-2S] cluster as a cofactor.

It catalyses the reaction (4R,5S)-dethiobiotin + (sulfur carrier)-SH + 2 reduced [2Fe-2S]-[ferredoxin] + 2 S-adenosyl-L-methionine = (sulfur carrier)-H + biotin + 2 5'-deoxyadenosine + 2 L-methionine + 2 oxidized [2Fe-2S]-[ferredoxin]. It participates in cofactor biosynthesis; biotin biosynthesis; biotin from 7,8-diaminononanoate: step 2/2. In terms of biological role, catalyzes the conversion of dethiobiotin (DTB) to biotin by the insertion of a sulfur atom into dethiobiotin via a radical-based mechanism. The protein is Biotin synthase of Methylobacterium sp. (strain 4-46).